The sequence spans 711 residues: Protein mono-ADP-ribosyltransferase PARP12 (711 aa).

C3H1-type zinc fingers lie at residues 103-128, 164-188, and 189-211; these read LCKF…HNLK, ICLH…IKLH, and ICQY…HEFT. A disordered region spans residues 247–279; the sequence is SALSKVSPSPAGPQGSSERKDSSGPVSPGTPSQ. At Ser-268 the chain carries Phosphoserine. 2 consecutive C3H1-type zinc fingers follow at residues 280–307 and 281–306; these read EESE…HFHL and ESEQ…VHFH. WWE domains lie at 308–371 and 374–468; these read PYRW…RLST and SVTK…KVCR. Cys-484 carries the ADP-ribosylcysteine modification. The region spanning 494–708 is the PARP catalytic domain; it reads IPDYWDPAAL…IFVALGNLFT (215 aa). ADP-ribosyl aspartic acid occurs at positions 610 and 621.

This sequence belongs to the ARTD/PARP family. As to quaternary structure, interacts with PARP11; this interaction plays a key role in zika virus suppression. Interacts with ISG15. Auto-mono-ADP-ribosylated. In terms of processing, phosphorylated by PRKD1.

The protein localises to the nucleus. It is found in the golgi apparatus. It localises to the trans-Golgi network. Its subcellular location is the cytoplasm. The protein resides in the stress granule. It carries out the reaction L-aspartyl-[protein] + NAD(+) = 4-O-(ADP-D-ribosyl)-L-aspartyl-[protein] + nicotinamide. The enzyme catalyses L-cysteinyl-[protein] + NAD(+) = S-(ADP-D-ribosyl)-L-cysteinyl-[protein] + nicotinamide + H(+). Its function is as follows. Mono-ADP-ribosyltransferase that mediates mono-ADP-ribosylation of target proteins. Displays anti-alphavirus activity during IFN-gamma immune activation by directly ADP-ribosylating the alphaviral non-structural proteins nsP3 and nsP4. Acts as a component of the PRKD1-driven regulatory cascade that selectively controls a major branch of the basolateral transport pathway by catalyzing the MARylation of GOLGA1. Acts also as a key regulator of mitochondrial function, protein translation, and inflammation. Inhibits PINK1/Parkin-dependent mitophagy and promotes cartilage degeneration by inhibiting the ubiquitination and SUMOylation of MFN1/2 by upregulating ISG15 and ISGylation. This chain is Protein mono-ADP-ribosyltransferase PARP12, found in Mus musculus (Mouse).